A 207-amino-acid chain; its full sequence is dTTP/UTP pyrophosphatase (207 aa).

The active-site Proton acceptor is the Asp87.

It belongs to the Maf family. YhdE subfamily. It depends on a divalent metal cation as a cofactor.

Its subcellular location is the cytoplasm. The enzyme catalyses dTTP + H2O = dTMP + diphosphate + H(+). It catalyses the reaction UTP + H2O = UMP + diphosphate + H(+). Its function is as follows. Nucleoside triphosphate pyrophosphatase that hydrolyzes dTTP and UTP. May have a dual role in cell division arrest and in preventing the incorporation of modified nucleotides into cellular nucleic acids. The protein is dTTP/UTP pyrophosphatase of Bordetella bronchiseptica (strain ATCC BAA-588 / NCTC 13252 / RB50) (Alcaligenes bronchisepticus).